Reading from the N-terminus, the 360-residue chain is Phenylalanine--tRNA ligase alpha subunit (360 aa).

Glutamate 264 contributes to the Mg(2+) binding site.

It belongs to the class-II aminoacyl-tRNA synthetase family. Phe-tRNA synthetase alpha subunit type 1 subfamily. In terms of assembly, tetramer of two alpha and two beta subunits. Mg(2+) is required as a cofactor.

The protein localises to the cytoplasm. It carries out the reaction tRNA(Phe) + L-phenylalanine + ATP = L-phenylalanyl-tRNA(Phe) + AMP + diphosphate + H(+). This is Phenylalanine--tRNA ligase alpha subunit from Streptomyces avermitilis (strain ATCC 31267 / DSM 46492 / JCM 5070 / NBRC 14893 / NCIMB 12804 / NRRL 8165 / MA-4680).